We begin with the raw amino-acid sequence, 366 residues long: Purple acid phosphatase 3 (366 aa).

Positions methionine 1–alanine 32 are cleaved as a signal peptide. Fe cation is bound at residue aspartate 81. N-linked (GlcNAc...) asparagine glycosylation occurs at asparagine 89. Residues aspartate 114 and tyrosine 117 each coordinate Fe cation. Zn(2+) is bound at residue aspartate 114. Zn(2+) is bound by residues asparagine 152 and histidine 246. Histidine 255 serves as the catalytic Proton donor. Residue histidine 281 participates in Zn(2+) binding. Histidine 281–histidine 283 lines the substrate pocket. A Fe cation-binding site is contributed by histidine 283.

Belongs to the metallophosphoesterase superfamily. Purple acid phosphatase family. Homodimer. Fe cation is required as a cofactor. It depends on Zn(2+) as a cofactor. Expressed in stems, leaves, flowers and siliques.

It is found in the secreted. It catalyses the reaction a phosphate monoester + H2O = an alcohol + phosphate. The polypeptide is Purple acid phosphatase 3 (PAP3) (Arabidopsis thaliana (Mouse-ear cress)).